We begin with the raw amino-acid sequence, 202 residues long: Imidazoleglycerol-phosphate dehydratase (202 aa).

This sequence belongs to the imidazoleglycerol-phosphate dehydratase family.

The protein resides in the cytoplasm. It catalyses the reaction D-erythro-1-(imidazol-4-yl)glycerol 3-phosphate = 3-(imidazol-4-yl)-2-oxopropyl phosphate + H2O. The protein operates within amino-acid biosynthesis; L-histidine biosynthesis; L-histidine from 5-phospho-alpha-D-ribose 1-diphosphate: step 6/9. The protein is Imidazoleglycerol-phosphate dehydratase of Rhodopirellula baltica (strain DSM 10527 / NCIMB 13988 / SH1).